Consider the following 757-residue polypeptide: Xaa-Pro dipeptidyl-peptidase (757 aa).

Active-site charge relay system residues include serine 348, aspartate 468, and histidine 498.

This sequence belongs to the peptidase S15 family. Homodimer.

Its subcellular location is the cytoplasm. It carries out the reaction Hydrolyzes Xaa-Pro-|- bonds to release unblocked, N-terminal dipeptides from substrates including Ala-Pro-|-p-nitroanilide and (sequentially) Tyr-Pro-|-Phe-Pro-|-Gly-Pro-|-Ile.. Its function is as follows. Removes N-terminal dipeptides sequentially from polypeptides having unsubstituted N-termini provided that the penultimate residue is proline. This chain is Xaa-Pro dipeptidyl-peptidase, found in Streptococcus pneumoniae (strain P1031).